The chain runs to 1070 residues: TSC22 domain family protein 1 (1070 aa).

Positions 1–98 (MHQPPESTAA…SQAQLQAQPL (98 aa)) are required for interaction with TGFBR1 and promotion of TGF-beta signaling. Disordered regions lie at residues 1–110 (MHQP…KKSG), 125–289 (ISSN…PASV), 458–487 (VTSE…VGSG), 604–637 (YSQA…STQM), and 830–858 (TSQV…AQTP). Residues 36–45 (GSASALNAAG) show a composition bias toward low complexity. Over residues 58–70 (FPPPSLLQPPPPA) the composition is skewed to pro residues. A compositionally biased stretch (low complexity) spans 84-100 (SLNLLSQAQLQAQPLAP). Positions 133–142 (EDTESYDDLD) are enriched in acidic residues. Residues 216-240 (HPHHLHHHHHIHHGHHLQHGHHHPS) are compositionally biased toward basic residues. The span at 241–250 (HVAVASASIP) shows a compositional bias: low complexity. Residues 261–271 (KLSTTGSSDSI) are compositionally biased toward polar residues. Residue Ser263 is modified to Phosphoserine. Composition is skewed to low complexity over residues 272-289 (TPVA…PASV) and 465-478 (TSGS…STRS). Pro residues predominate over residues 611 to 622 (VQTPLPGAPPPQ). Residues 830-845 (TSQVSSAGPSGMPSAP) show a composition bias toward low complexity. Polar residues predominate over residues 849–858 (VPPQNIAQTP). Residues 1003–1024 (LKEQIKELIEKNSQLEQENNLL) are leucine-zipper. The interval 1034–1070 (AQFQAQLQTGSPPATTQPQGTTQPPAQPASQGSGPTA) is disordered. Residues 1041-1070 (QTGSPPATTQPQGTTQPPAQPASQGSGPTA) show a composition bias toward low complexity.

The protein belongs to the TSC-22/Dip/Bun family. Forms homodimers. Forms heterodimers. Component of a complex composed of TSC22D1 (via N-terminus), TGFBR1 and TGFBR2; the interaction between TSC22D1 and TGFBR1 is inhibited by SMAD7 and promoted by TGFB1. Interacts with SMAD7; the interaction requires TGF-beta and the interaction is inhibited by TGFBR1. Interacts with TPT1/fortilin; interaction results in the destabilization of TSC22D1 protein and prevents TSC22D1-mediated apoptosis. Interacts with SMAD4 (via N-terminus). Interacts with ACVRL1/ALK1, ACVR1/ALK2, BMPR1A/ALK3, ACVR1B/ALK4, BMPR1B/ALK6, ACVR2A/ACTRII, and BMPR2. Interacts with SMAD6. Interacts with TFE3; the interaction is enhanced in the presence of TGF-beta. In terms of assembly, forms a heterodimer with TSC22D4/THG1. As to quaternary structure, forms a heterodimer with TSC22D4/THG1. Interacts with histone H1-2. Interacts with GNL3.

The protein localises to the cytoplasm. It is found in the nucleus. Its subcellular location is the cell membrane. The protein resides in the mitochondrion. Its function is as follows. Transcriptional repressor. Acts on the C-type natriuretic peptide (CNP) promoter. Acts to promote CASP3-mediated apoptosis. Positively regulates TGF-beta signaling by interacting with SMAD7 which inhibits binding of SMAD7 to TGFBR1, preventing recruitment of SMURF ubiquitin ligases to TGFBR1 and inhibiting SMURF-mediated ubiquitination and degradation of TGFBR1. Contributes to enhancement of TGF-beta signaling by binding to and modulating the transcription activator activity of SMAD4. Promotes TGF-beta-induced transcription of COL1A2; via its interaction with TFE3 at E-boxes in the gene proximal promoter. Plays a role in the repression of hematopoietic precursor cell growth. Promotes IL2 deprivation-induced apoptosis in T-lymphocytes, via repression of TSC22D3/GILZ transcription and activation of the caspase cascade. May act to negatively regulate TGFB3 signaling and thereby inhibit cell death in mammary gland cells. Functionally, positively regulates cell death in response to TGFB3 during mammary gland involution. In Pongo abelii (Sumatran orangutan), this protein is TSC22 domain family protein 1.